A 92-amino-acid chain; its full sequence is YcgL domain-containing protein HS_0805 (92 aa).

One can recognise a YcgL domain in the interval 1-85 (MLCAIYKTKR…QQENLLEQER (85 aa)).

The protein is YcgL domain-containing protein HS_0805 of Histophilus somni (strain 129Pt) (Haemophilus somnus).